The following is a 776-amino-acid chain: Microtubule-associated protein tau (776 aa).

Basic and acidic residues predominate over residues 1–26 (MAEPRQEFEVMEDHAGTYGLGDRKDQ). Disordered stretches follow at residues 1 to 263 (MAEP…PAKG) and 276 to 591 (STEI…LKNV). An N-acetylalanine modification is found at A2. Y18 and Y29 each carry phosphotyrosine. K44 is covalently cross-linked (Glycyl lysine isopeptide (Lys-Gly) (interchain with G-Cter in ubiquitin)). Phosphoserine is present on residues S46 and S61. Residues 61-71 (SETSDAKSTPT) are compositionally biased toward polar residues. Residues T69, T71, and T111 each carry the phosphothreonine modification. 2 stretches are compositionally biased toward basic and acidic residues: residues 179-189 (EGGRHAPELLK) and 207-216 (GGKERPGSKE). S214 is subject to Phosphoserine. Residues 217 to 228 (EVDEDRDVDESS) are compositionally biased toward acidic residues. Residues 314–323 (EQAHSEEHLG) are compositionally biased toward basic and acidic residues. The span at 324–340 (RAAFPGAPGEGPEARGP) shows a compositional bias: low complexity. Composition is skewed to basic and acidic residues over residues 344-356 (EDTK…ESSE) and 381-393 (KSKD…DKKA). The segment covering 440 to 452 (KYVSSVTPRTGSS) has biased composition (polar residues). The segment covering 455 to 466 (KEMKLKGADGKT) has biased composition (basic and acidic residues). At T470 the chain carries Phosphothreonine. Omega-N-methylarginine is present on R472. K480 carries the post-translational modification N6,N6-dimethyllysine; alternate. At K480 the chain carries N6-acetyllysine; alternate. A phosphothreonine mark is found at T486, T492, and T498. Phosphoserine is present on residues S502, S526, and S530. The segment covering 517–528 (RSERGEPPKSGD) has biased composition (basic and acidic residues). A compositionally biased stretch (low complexity) spans 529-549 (RSGYSSPGSPGTPGSRSRTPS). Y532 carries the post-translational modification Phosphotyrosine. Residues S533, S534, and S537 each carry the phosphoserine modification. Phosphothreonine occurs at positions 540 and 547. S549 carries the phosphoserine modification. T552 carries the post-translational modification Phosphothreonine. Position 560 is an N6-acetyllysine (K560). A Phosphothreonine modification is found at T566. Phosphoserine is present on residues S570 and S572. Tau/MAP repeat units follow at residues 579–609 (QTAP…GGGK), 610–640 (VQII…GGGS), 641–671 (VQIV…GGGQ), and 672–703 (VEVK…GGGN). K589 is covalently cross-linked (Glycyl lysine isopeptide (Lys-Gly) (interchain with G-Cter in ubiquitin)). K594 carries the post-translational modification N6-acetyllysine; alternate. K594 is modified (N6-methyllysine; alternate). K594 participates in a covalent cross-link: Glycyl lysine isopeptide (Lys-Gly) (interchain with G-Cter in ubiquitin); alternate. At S597 the chain carries Phosphoserine. A Glycyl lysine isopeptide (Lys-Gly) (interchain with G-Cter in ubiquitin) cross-link involves residue K602. K616 is subject to N6-acetyllysine; alternate. K616 is covalently cross-linked (Glycyl lysine isopeptide (Lys-Gly) (interchain with G-Cter in ubiquitin); alternate). Phosphoserine is present on residues S620 and S624. K625 bears the N6-acetyllysine mark. S628 is subject to Phosphoserine. At K633 the chain carries N6-acetyllysine; alternate. Residue K633 forms a Glycyl lysine isopeptide (Lys-Gly) (interchain with G-Cter in ubiquitin); alternate linkage. S640 is modified (phosphoserine). Position 646 is an N6,N6-dimethyllysine; alternate (K646). An N6-acetyllysine; alternate mark is found at K646, K652, and K656. Glycyl lysine isopeptide (Lys-Gly) (interchain with G-Cter in ubiquitin); alternate cross-links involve residues K646, K652, and K656. A Phosphoserine modification is found at S659. K666, K678, and K682 each carry N6-acetyllysine; alternate. Residues K666, K678, and K682 each participate in a glycyl lysine isopeptide (Lys-Gly) (interchain with G-Cter in ubiquitin); alternate cross-link. The residue at position 684 (R684) is an Omega-N-methylarginine. S687 carries the phosphoserine modification. Residue K688 forms a Glycyl lysine isopeptide (Lys-Gly) (interchain with G-Cter in ubiquitin) linkage. S691 is subject to Phosphoserine. K704 bears the N6-acetyllysine; alternate mark. Residue K704 forms a Glycyl lysine isopeptide (Lys-Gly) (interchain with G-Cter in ubiquitin); alternate linkage. K710 is covalently cross-linked (Glycyl lysine isopeptide (Lys-Gly) (interchain with G-Cter in ubiquitin)). K720 is subject to N6-acetyllysine; alternate. K720 is covalently cross-linked (Glycyl lysine isopeptide (Lys-Gly) (interchain with G-Cter in ubiquitin); alternate). At Y729 the chain carries Phosphotyrosine. S731 and S735 each carry phosphoserine. The segment at 733–752 (VVSGDTSPRHLSNVSSTGSI) is disordered. The span at 736 to 751 (GDTSPRHLSNVSSTGS) shows a compositional bias: polar residues. T738 bears the Phosphothreonine mark. Residues S739, S744, S751, and S757 each carry the phosphoserine modification. A Phosphothreonine modification is found at T762.

In terms of assembly, interacts with MARK1, MARK2, MARK3 and MARK4. Interacts with SQSTM1 when polyubiquitinated. Interacts with PSMC2 through SQSTM1. Interacts with FKBP4. Binds to CSNK1D. Interacts with SGK1. Interacts with EPM2A; the interaction dephosphorylates MAPT at Ser-396. Interacts with PIN1. Interacts with LRRK2. Interacts with LRP1, leading to endocytosis; this interaction is reduced in the presence of LRPAP1/RAP. In terms of processing, polyubiquitinated. Requires functional TRAF6 and may provoke SQSTM1-dependent degradation by the proteasome. Post-translationally, phosphorylation at various serine and threonine residues in S-P or T-P motifs by proline-directed protein kinases (PDPK1, CDK1, CDK5, GSK3, MAPK) (a few sites per protein in interphase, more in mitosis), and at serine residues in K-X-G-S motifs by MAP/microtubule affinity-regulating kinase (MARK1, MARK2, MARK3 or MARK4), causing detachment from microtubules, and their disassembly. Phosphorylation at Ser-597 by BRSK1 and BRSK2 in neurons affects ability to bind microtubules and plays a role in neuron polarization. Phosphorylation at Ser-214 by SGK1 mediates microtubule depolymerization and neurite formation in hippocampal neurons. Phosphorylated by PHK. Dephosphorylation at several serine and threonine residues by the serine/threonine phosphatase PPP5C.

Its subcellular location is the cytoplasm. The protein localises to the cytosol. It is found in the cell membrane. It localises to the cytoskeleton. The protein resides in the cell projection. Its subcellular location is the axon. The protein localises to the dendrite. Functionally, promotes microtubule assembly and stability, and might be involved in the establishment and maintenance of neuronal polarity. The C-terminus binds axonal microtubules while the N-terminus binds neural plasma membrane components, suggesting that tau functions as a linker protein between both. Axonal polarity is predetermined by tau localization (in the neuronal cell) in the domain of the cell body defined by the centrosome. The short isoforms allow plasticity of the cytoskeleton whereas the longer isoforms may preferentially play a role in its stabilization. This chain is Microtubule-associated protein tau (MAPT), found in Gorilla gorilla gorilla (Western lowland gorilla).